Reading from the N-terminus, the 816-residue chain is Stemod-13(17)-ene synthase (816 aa).

The segment covering 1 to 10 (MMLLSSSYSG) has biased composition (polar residues). A disordered region spans residues 1-24 (MMLLSSSYSGGQFPGVSPLGTRPK). 5 residues coordinate Mg(2+): Asp553, Asp557, Asn698, Thr702, and Glu706. The short motif at 553–557 (DDFFD) is the DDXXD motif element.

It belongs to the terpene synthase family. Requires Mg(2+) as cofactor.

The catalysed reaction is 9alpha-copalyl diphosphate = stemod-13(17)-ene + diphosphate. In terms of biological role, catalyzes the conversion of syn-copalyl diphosphate to stemodene. This chain is Stemod-13(17)-ene synthase (KSL11), found in Oryza sativa subsp. indica (Rice).